Reading from the N-terminus, the 308-residue chain is tRNA-cytidine(32) 2-sulfurtransferase (308 aa).

The short motif at 39–44 (SGGKDS) is the PP-loop motif element. Cysteine 114, cysteine 117, and cysteine 205 together coordinate [4Fe-4S] cluster.

It belongs to the TtcA family. Homodimer. Requires Mg(2+) as cofactor. [4Fe-4S] cluster is required as a cofactor.

It localises to the cytoplasm. It carries out the reaction cytidine(32) in tRNA + S-sulfanyl-L-cysteinyl-[cysteine desulfurase] + AH2 + ATP = 2-thiocytidine(32) in tRNA + L-cysteinyl-[cysteine desulfurase] + A + AMP + diphosphate + H(+). The protein operates within tRNA modification. In terms of biological role, catalyzes the ATP-dependent 2-thiolation of cytidine in position 32 of tRNA, to form 2-thiocytidine (s(2)C32). The sulfur atoms are provided by the cysteine/cysteine desulfurase (IscS) system. This Cupriavidus taiwanensis (strain DSM 17343 / BCRC 17206 / CCUG 44338 / CIP 107171 / LMG 19424 / R1) (Ralstonia taiwanensis (strain LMG 19424)) protein is tRNA-cytidine(32) 2-sulfurtransferase.